A 91-amino-acid chain; its full sequence is Small ribosomal subunit protein uS19 (91 aa).

It belongs to the universal ribosomal protein uS19 family.

In terms of biological role, protein S19 forms a complex with S13 that binds strongly to the 16S ribosomal RNA. The polypeptide is Small ribosomal subunit protein uS19 (Bordetella avium (strain 197N)).